The chain runs to 125 residues: Protein Bouncer (125 aa).

Residues 1-18 form the signal peptide; sequence MGCVLLFLLLVCVPVVLP. 5 disulfide bridges follow: cysteine 23–cysteine 48, cysteine 26–cysteine 35, cysteine 42–cysteine 66, cysteine 72–cysteine 91, and cysteine 92–cysteine 97. Residues 23–98 form the UPAR/Ly6 domain; that stretch reads CLFCPVTSLN…FSCCGGHYCN (76 aa). N-linked (GlcNAc...) asparagine glycosylation occurs at asparagine 32. An N-linked (GlcNAc...) asparagine glycan is attached at asparagine 84. Asparagine 98 carries the GPI-anchor amidated asparagine lipid modification. A propeptide spans 99–125 (removed in mature form); it reads SQPRAEPGGRLLLLLLPAAALTAAGAL.

Belongs to the SPACA4/bouncer family. Interacts with spermatocyte complex composed of izumo1, spaca6 and tmem81. N-glycosylated. Highly expressed in oocytes. Not expressed in testis.

Its subcellular location is the cell membrane. Oocyte-expressed fertilization factor that mediates sperm-egg binding and is essential for sperm entry into the egg. Necessary and sufficient to mediate species-specific gamete recognition and fertilization, which is essential for vertebrate species performing external fertilization. External fertilization cannot guarantee that only conspecific sperm reaches the egg by precopulatory mate choice: proteins such as Bouncer can therefore support the selection of conspecific sperm. This is Protein Bouncer from Danio rerio (Zebrafish).